Reading from the N-terminus, the 473-residue chain is MENEMKHSNDALHVVMFPFFAFGHISPFVQLANKLSSYGVKVSFFTASGNASRVKSMLNSAPTTHIVPLTLPHVEGLPPGAESTAELTPASAELLKVALDLMQPQIKTLLSHLKPHFVLFDFAQEWLPKMANGLGIKTVYYSVVVALSTAFLTCPARVLEPKKYPSLEDMKKPPLGFPQTSVTSVRTFEARDFLYVFKSFHNGPTLYDRIQSGLRGCSAILAKTCSQMEGPYIKYVEAQFNKPVFLIGPVVPDPPSGKLEEKWATWLNKFEGGTVIYCSFGSETFLTDDQVKELALGLEQTGLPFFLVLNFPANVDVSAELNRALPEGFLERVKDKGIIHSGWVQQQNILAHSSVGCYVCHAGFSSVIEALVNDCQVVMLPQKGDQILNAKLVSGDMEAGVEINRRDEDGYFGKEDIKEAVEKVMVDVEKDPGKLIRENQKKWKEFLLNKDIQSKYIGNLVNEMTAMAKVSTT.

The protein belongs to the UDP-glycosyltransferase family. As to expression, expressed in petals, styles and anthers.

It participates in pigment biosynthesis; anthocyanin biosynthesis. Controls the rhamnosylation of reddish anthocyanidin-3-O-glucosides, which is the first step in a series of modifications that finally yield magenta or blue/purple coloured anthocyanins. Controls the conversion of anthocyanidin-3-O-glucosides to anthocyanidin-3-O-rutinosides. This Petunia hybrida (Petunia) protein is Anthocyanidin-3-O-glucoside rhamnosyltransferase.